Reading from the N-terminus, the 212-residue chain is Pyridoxine/pyridoxamine 5'-phosphate oxidase (212 aa).

Residues 8–11 (RKNY) and K66 contribute to the substrate site. FMN contacts are provided by residues 61 to 66 (RIVLIK), 76 to 77 (FT), R82, K83, and Q105. Positions 123, 127, and 131 each coordinate substrate. FMN-binding positions include 140–141 (QS) and W184. Substrate is bound at residue 190–192 (RLH). R194 serves as a coordination point for FMN.

Belongs to the pyridoxamine 5'-phosphate oxidase family. As to quaternary structure, homodimer. FMN serves as cofactor.

The enzyme catalyses pyridoxamine 5'-phosphate + O2 + H2O = pyridoxal 5'-phosphate + H2O2 + NH4(+). It catalyses the reaction pyridoxine 5'-phosphate + O2 = pyridoxal 5'-phosphate + H2O2. It functions in the pathway cofactor metabolism; pyridoxal 5'-phosphate salvage; pyridoxal 5'-phosphate from pyridoxamine 5'-phosphate: step 1/1. The protein operates within cofactor metabolism; pyridoxal 5'-phosphate salvage; pyridoxal 5'-phosphate from pyridoxine 5'-phosphate: step 1/1. Catalyzes the oxidation of either pyridoxine 5'-phosphate (PNP) or pyridoxamine 5'-phosphate (PMP) into pyridoxal 5'-phosphate (PLP). This chain is Pyridoxine/pyridoxamine 5'-phosphate oxidase, found in Paraburkholderia phymatum (strain DSM 17167 / CIP 108236 / LMG 21445 / STM815) (Burkholderia phymatum).